The chain runs to 2214 residues: Genome polyprotein (2214 aa).

Disordered regions lie at residues 1 to 21 (MGAQ…VATG) and 600 to 619 (KPQK…VNSQ). Gly-2 is lipidated: N-myristoyl glycine; by host. Topologically, residues 2-1525 (GAQVSSQKVG…NLNRAMTILQ (1524 aa)) are cytoplasmic. 2 amphipathic alpha-helix regions span residues 580–601 (QGIE…QPKP) and 581–601 (GIEE…QPKP). A compositionally biased stretch (polar residues) spans 606 to 619 (TAQSTPSTSGVNSQ). Catalysis depends on for protease 2A activity residues His-906 and Asp-924. 2 residues coordinate Zn(2+): Cys-941 and Cys-943. Catalysis depends on Cys-995, which acts as the For protease 2A activity. Residues Cys-1001 and His-1003 each contribute to the Zn(2+) site. The segment at 1133-1205 (GDSWLKKFTE…HQSCPSQEQQ (73 aa)) is membrane-binding. Positions 1133–1271 (GDSWLKKFTE…SPGTGKSIAT (139 aa)) are oligomerization. Residues 1154–1158 (SNKIS) form an RNA-binding region. The SF3 helicase domain occupies 1237–1393 (ENTINNYIQF…SEHSIKGKLN (157 aa)). 1261 to 1268 (GSPGTGKS) lines the ATP pocket. Zn(2+)-binding residues include Cys-1401, Cys-1404, Cys-1413, and Cys-1418. The C4-type zinc finger occupies 1401–1418 (CKDCPQPANFKKCCPLVC). Residues 1445 to 1452 (ERNRRANI) form an RNA-binding region. The oligomerization stretch occupies residues 1456-1461 (MEALFQ). An intramembrane segment occupies 1526 to 1541 (AVTTFAAVAAVVYVMY). The Cytoplasmic portion of the chain corresponds to 1542-2214 (KLFAGHQGAY…TLYRRWLDSF (673 aa)). Tyr-1551 carries the post-translational modification O-(5'-phospho-RNA)-tyrosine. The Peptidase C3 domain maps to 1571-1749 (GPGFDYAVAM…FAAALKRSYF (179 aa)). Active-site for protease 3C activity residues include His-1610, Glu-1641, and Cys-1717. Positions 1980 to 2095 (EKLFAFDYTG…SYPHEVDASL (116 aa)) constitute a RdRp catalytic domain. Mg(2+) contacts are provided by Asp-1986 and Asp-2081.

This sequence belongs to the picornaviruses polyprotein family. Interacts with capsid protein VP1 and capsid protein VP3 to form heterotrimeric protomers. In terms of assembly, interacts with capsid protein VP0, and capsid protein VP3 to form heterotrimeric protomers. Five protomers subsequently associate to form pentamers which serve as building blocks for the capsid. Interacts with capsid protein VP2, capsid protein VP3 and capsid protein VP4 following cleavage of capsid protein VP0. As to quaternary structure, interacts with capsid protein VP1 and capsid protein VP3 in the mature capsid. Interacts with capsid protein VP0 and capsid protein VP1 to form heterotrimeric protomers. Five protomers subsequently associate to form pentamers which serve as building blocks for the capsid. Interacts with capsid protein VP4 in the mature capsid. Interacts with protein 2C; this interaction may be important for virion morphogenesis. In terms of assembly, interacts with capsid protein VP1 and capsid protein VP3. As to quaternary structure, homodimer. Homohexamer; forms a hexameric ring structure with 6-fold symmetry characteristic of AAA+ ATPases. Interacts (via N-terminus) with host RTN3 (via reticulon domain); this interaction is important for viral replication. Interacts with capsid protein VP3; this interaction may be important for virion morphogenesis. In terms of assembly, interacts with protein 3CD. As to quaternary structure, homodimer. Interacts with host GBF1. Interacts (via GOLD domain) with host ACBD3 (via GOLD domain); this interaction allows the formation of a viral protein 3A/ACBD3 heterotetramer with a 2:2 stoichiometry, which will stimulate the recruitment of host PI4KB in order to synthesize PI4P at the viral RNA replication sites. Interacts with RNA-directed RNA polymerase. In terms of assembly, interacts with protein 3AB and with RNA-directed RNA polymerase. As to quaternary structure, interacts with Viral protein genome-linked and with protein 3CD. Mg(2+) is required as a cofactor. Post-translationally, specific enzymatic cleavages in vivo by the viral proteases yield processing intermediates and the mature proteins. In terms of processing, myristoylation is required for the formation of pentamers during virus assembly. Further assembly of 12 pentamers and a molecule of genomic RNA generates the provirion. During virion maturation, immature virions are rendered infectious following cleavage of VP0 into VP4 and VP2. This maturation seems to be an autocatalytic event triggered by the presence of RNA in the capsid and it is followed by a conformational change infectious virion. Post-translationally, myristoylation is required during RNA encapsidation and formation of the mature virus particle. In terms of processing, VPg is uridylylated by the polymerase into VPg-pUpU. This acts as a nucleotide-peptide primer for the genomic RNA replication.

Its subcellular location is the virion. The protein localises to the host cytoplasm. It localises to the host cytoplasmic vesicle membrane. The protein resides in the host nucleus. It catalyses the reaction a ribonucleoside 5'-triphosphate + H2O = a ribonucleoside 5'-diphosphate + phosphate + H(+). The catalysed reaction is Selective cleavage of Tyr-|-Gly bond in the picornavirus polyprotein.. It carries out the reaction RNA(n) + a ribonucleoside 5'-triphosphate = RNA(n+1) + diphosphate. The enzyme catalyses Selective cleavage of Gln-|-Gly bond in the poliovirus polyprotein. In other picornavirus reactions Glu may be substituted for Gln, and Ser or Thr for Gly.. Replication or transcription is subject to high level of random mutations by the nucleotide analog ribavirin. Its function is as follows. Forms an icosahedral capsid of pseudo T=3 symmetry with capsid proteins VP2 and VP3. The capsid is 300 Angstroms in diameter, composed of 60 copies of each capsid protein and enclosing the viral positive strand RNA genome. Capsid protein VP1 mainly forms the vertices of the capsid. Capsid protein VP1 interacts with host cell receptor to provide virion attachment to target host cells. This attachment induces virion internalization. Tyrosine kinases are probably involved in the entry process. After binding to its receptor, the capsid undergoes conformational changes. Capsid protein VP1 N-terminus (that contains an amphipathic alpha-helix) and capsid protein VP4 are externalized. Together, they shape a pore in the host membrane through which viral genome is translocated to host cell cytoplasm. In terms of biological role, forms an icosahedral capsid of pseudo T=3 symmetry with capsid proteins VP2 and VP3. The capsid is 300 Angstroms in diameter, composed of 60 copies of each capsid protein and enclosing the viral positive strand RNA genome. Lies on the inner surface of the capsid shell. After binding to the host receptor, the capsid undergoes conformational changes. Capsid protein VP4 is released, Capsid protein VP1 N-terminus is externalized, and together, they shape a pore in the host membrane through which the viral genome is translocated into the host cell cytoplasm. Functionally, component of immature procapsids, which is cleaved into capsid proteins VP4 and VP2 after maturation. Allows the capsid to remain inactive before the maturation step. Its function is as follows. Cysteine protease that cleaves viral polyprotein and specific host proteins. It is responsible for the autocatalytic cleavage between the P1 and P2 regions, which is the first cleavage occurring in the polyprotein. Also cleaves the host translation initiation factor EIF4G1, in order to shut down the capped cellular mRNA translation. Inhibits the host nucleus-cytoplasm protein and RNA trafficking by cleaving host members of the nuclear pores. Counteracts stress granule formation probably by antagonizing its assembly or promoting its dissassembly. Cleaves and inhibits host IFIH1/MDA5, thereby inhibiting the type-I IFN production and the establishment of the antiviral state. Cleaves and inhibits host MAVS, thereby inhibiting the type-I IFN production and the establishment of the antiviral state. In terms of biological role, plays an essential role in the virus replication cycle by acting as a viroporin. Creates a pore in the host endoplasmic reticulum and as a consequence releases Ca2+ in the cytoplasm of infected cell. In turn, high levels of cytoplasmic calcium may trigger membrane trafficking and transport of viral ER-associated proteins to viroplasms, sites of viral genome replication. Induces and associates with structural rearrangements of intracellular membranes. Displays RNA-binding, nucleotide binding and NTPase activities. May play a role in virion morphogenesis and viral RNA encapsidation by interacting with the capsid protein VP3. Functionally, localizes the viral replication complex to the surface of membranous vesicles. Together with protein 3CD binds the Cis-Active RNA Element (CRE) which is involved in RNA synthesis initiation. Acts as a cofactor to stimulate the activity of 3D polymerase, maybe through a nucleid acid chaperone activity. Its function is as follows. Localizes the viral replication complex to the surface of membranous vesicles. It inhibits host cell endoplasmic reticulum-to-Golgi apparatus transport and causes the disassembly of the Golgi complex, possibly through GBF1 interaction. This would result in depletion of MHC, trail receptors and IFN receptors at the host cell surface. Plays an essential role in viral RNA replication by recruiting ACBD3 and PI4KB at the viral replication sites, thereby allowing the formation of the rearranged membranous structures where viral replication takes place. In terms of biological role, acts as a primer for viral RNA replication and remains covalently bound to viral genomic RNA. VPg is uridylylated prior to priming replication into VPg-pUpU. The oriI viral genomic sequence may act as a template for this. The VPg-pUpU is then used as primer on the genomic RNA poly(A) by the RNA-dependent RNA polymerase to replicate the viral genome. During genome replication, the VPg-RNA linkage is removed by the host TDP2, thereby accelerating replication. During the late stage of the replication cycle, host TDP2 is excluded from sites of viral RNA synthesis and encapsidation, allowing for the generation of progeny virions. Involved in the viral replication complex and viral polypeptide maturation. It exhibits protease activity with a specificity and catalytic efficiency that is different from protease 3C. Protein 3CD lacks polymerase activity. Protein 3CD binds to the 5'UTR of the viral genome. Functionally, replicates the viral genomic RNA on the surface of intracellular membranes. May form linear arrays of subunits that propagate along a strong head-to-tail interaction called interface-I. Covalently attaches UMP to a tyrosine of VPg, which is used to prime RNA synthesis. The positive stranded RNA genome is first replicated at virus induced membranous vesicles, creating a dsRNA genomic replication form. This dsRNA is then used as template to synthesize positive stranded RNA genomes. ss(+)RNA genomes are either translated, replicated or encapsidated. Its function is as follows. Major viral protease that mediates proteolytic processing of the polyprotein. Cleaves host EIF5B, contributing to host translation shutoff. Also cleaves host PABPC1, contributing to host translation shutoff. Cleaves host NLRP1, triggers host N-glycine-mediated degradation of the autoinhibitory NLRP1 N-terminal fragment. The chain is Genome polyprotein from Coxsackievirus A24 (strain EH24/70).